The chain runs to 234 residues: HTH-type transcriptional regulator ArcR (234 aa).

40 to 129 (VRHYTKGQVI…MAFLCKANDD (90 aa)) contacts a nucleoside 3',5'-cyclic phosphate. An HTH crp-type domain is found at 155-228 (KFAKDRIIKL…HKNWLVSKHL (74 aa)). A DNA-binding region (H-T-H motif) is located at residues 188 to 207 (IQLMSDMAGISRETAGHIIH).

Its subcellular location is the cytoplasm. Its function is as follows. Positively regulates the expression of the arcABDCR operon under anaerobic conditions, thus playing an essential role in arginine catabolism. May also control the expression of genes encoding proteins which are involved in anaerobic metabolism. Can bind cyclic AMP. In Staphylococcus aureus (strain USA300 / TCH1516), this protein is HTH-type transcriptional regulator ArcR (arcR).